Consider the following 107-residue polypeptide: EPIDERMAL PATTERNING FACTOR-like protein 5 (107 aa).

Residues 1–22 form the signal peptide; it reads MGVVLPTLIVYAFLLFFSSSSA. 3 disulfides stabilise this stretch: Cys64-Cys98, Cys68-Cys74, and Cys71-Cys100.

Belongs to the plant cysteine rich small secretory peptide family. Epidermal patterning factor subfamily. In terms of assembly, interacts with ERECTA. Expressed asymetically in the hypocotyl, on the side proximal to the folded cotyledons at germination. Detected in developing flowers, the chalazal region of ovules and near the root apex, but not in inflorescence stems. Expressed in cotyledons, flowers, adult leaves and fruits.

The protein localises to the secreted. Functionally, controls stomatal patterning. Mediates differentiation of stomatal lineage cells to pavement cells and stomatal development inhibition. TMM (AC Q9SSD1) functions to dampen or block CLL1 signaling. Acts as a growth-regulatory ligand for ERECTA family receptors. Promotes fruit growth and fertility. This is EPIDERMAL PATTERNING FACTOR-like protein 5 from Arabidopsis thaliana (Mouse-ear cress).